The primary structure comprises 144 residues: Putative pre-16S rRNA nuclease (144 aa).

It belongs to the YqgF nuclease family.

The protein resides in the cytoplasm. In terms of biological role, could be a nuclease involved in processing of the 5'-end of pre-16S rRNA. The sequence is that of Putative pre-16S rRNA nuclease from Picosynechococcus sp. (strain ATCC 27264 / PCC 7002 / PR-6) (Agmenellum quadruplicatum).